Consider the following 279-residue polypeptide: Tryptophan 2,3-dioxygenase (279 aa).

Residues 48–52 (FIVIH), Y110, and R114 contribute to the substrate site. H237 provides a ligand contact to heme. T251 is a substrate binding site.

Belongs to the tryptophan 2,3-dioxygenase family. In terms of assembly, homotetramer. It depends on heme as a cofactor.

It carries out the reaction L-tryptophan + O2 = N-formyl-L-kynurenine. The protein operates within amino-acid degradation; L-tryptophan degradation via kynurenine pathway; L-kynurenine from L-tryptophan: step 1/2. In terms of biological role, heme-dependent dioxygenase that catalyzes the oxidative cleavage of the L-tryptophan (L-Trp) pyrrole ring and converts L-tryptophan to N-formyl-L-kynurenine. Catalyzes the oxidative cleavage of the indole moiety. In Bacillus thuringiensis (strain Al Hakam), this protein is Tryptophan 2,3-dioxygenase.